The following is a 170-amino-acid chain: RNA pyrophosphohydrolase (170 aa).

Residues 8–158 form the Nudix hydrolase domain; it reads PYRTCVGMML…KRPVYERVVK (151 aa). Positions 46–67 match the Nudix box motif; it reads GGVDPGEDTWLAAKRELYEETS.

It belongs to the Nudix hydrolase family. RppH subfamily. The cofactor is a divalent metal cation.

Accelerates the degradation of transcripts by removing pyrophosphate from the 5'-end of triphosphorylated RNA, leading to a more labile monophosphorylated state that can stimulate subsequent ribonuclease cleavage. In Nitrobacter winogradskyi (strain ATCC 25391 / DSM 10237 / CIP 104748 / NCIMB 11846 / Nb-255), this protein is RNA pyrophosphohydrolase.